Reading from the N-terminus, the 181-residue chain is Regulator of G-protein signaling 10 (181 aa).

The tract at residues 1–35 (MFTRAVSRLSRKRPPSDIHDGDGSSSSGHQSLKST) is disordered. Phosphoserine occurs at positions 24 and 41. Residues 41 to 156 (SLENLLEDPE…LKSDLFLKHR (116 aa)) form the RGS domain. The S-palmitoyl cysteine moiety is linked to residue C74. Residues 157–181 (RTEEEEEDPPDAQTAAKRASRIYNT) are disordered. A Phosphoserine modification is found at S176.

In terms of assembly, interacts with GNAZ, GNAI1 and GNAI3. Associates specifically with the activated, GTP-bound forms of GNAZ and GNAI3.

It is found in the cytoplasm. Its subcellular location is the cytosol. The protein resides in the nucleus. Functionally, regulates G protein-coupled receptor signaling cascades, including signaling downstream of the muscarinic acetylcholine receptor CHRM2. Inhibits signal transduction by increasing the GTPase activity of G protein alpha subunits, thereby driving them into their inactive GDP-bound form. Modulates the activity of potassium channels that are activated in response to CHRM2 signaling. Activity on GNAZ is inhibited by palmitoylation of the G-protein. The sequence is that of Regulator of G-protein signaling 10 (Rgs10) from Rattus norvegicus (Rat).